Consider the following 437-residue polypeptide: MSDFIDRALITVKAGDGGDGMATFRREKYVPRGGPDGGDGGRGGSVYLEVSPHLNTLLPFRFETHFEADKGLNAGRQRKRGRTGEDTFIRVPPGTIVSAEIEGEVQTVDLLFPGQKLLVARGGKGGLGNTHFATASNQVPRIAELGQPGEERELQLELKVIADVGLVGFPNAGKSTLLSMVSAARPKIANYPFTTLSPNLGVAEFNDFTFVVADIPGLIEGASRGVGLGHDFLRHIERTRILVHVLDAAGTEGRDPFEDFLTINAELKAYSSELAQRPQLVALNKTDIPDAEAFDELMRPQIIAWGIDPENIFPISAATNQGLQPLQRRIVDILREMPERITRLPYSEEILTFRFSNIDPNDFWLETEEDGVLRVHGEKIERLVSMTNFAQSESLERLQRVLEAMGVSAALFAAGVRHGDPVRIEKAELLWQDESIG.

In terms of domain architecture, Obg spans 2 to 161; the sequence is SDFIDRALIT…RELQLELKVI (160 aa). Positions 162-335 constitute an OBG-type G domain; that stretch reads ADVGLVGFPN…LQRRIVDILR (174 aa). Residues 168–175, 193–197, 214–217, 284–287, and 316–318 each bind GTP; these read GFPNAGKS, FTTLS, DIPG, NKTD, and SAA. Mg(2+) is bound by residues serine 175 and threonine 195. The OCT domain maps to 355–433; the sequence is FSNIDPNDFW…IEKAELLWQD (79 aa).

The protein belongs to the TRAFAC class OBG-HflX-like GTPase superfamily. OBG GTPase family. Monomer. Requires Mg(2+) as cofactor.

It localises to the cytoplasm. Its function is as follows. An essential GTPase which binds GTP, GDP and possibly (p)ppGpp with moderate affinity, with high nucleotide exchange rates and a fairly low GTP hydrolysis rate. Plays a role in control of the cell cycle, stress response, ribosome biogenesis and in those bacteria that undergo differentiation, in morphogenesis control. This Herpetosiphon aurantiacus (strain ATCC 23779 / DSM 785 / 114-95) protein is GTPase Obg.